Consider the following 352-residue polypeptide: Protein-glutamate methylesterase/protein-glutamine glutaminase (352 aa).

The 118-residue stretch at 4-121 folds into the Response regulatory domain; it reads RVLIVDDSAT…YDGIDEIQKE (118 aa). A 4-aspartylphosphate modification is found at aspartate 55. Residues 159–351 enclose the CheB-type methylesterase domain; the sequence is AQTTNKLIAI…VKIASLLSER (193 aa). Catalysis depends on residues serine 171, histidine 197, and aspartate 293.

Belongs to the CheB family. In terms of processing, phosphorylated by CheA. Phosphorylation of the N-terminal regulatory domain activates the methylesterase activity.

The protein resides in the cytoplasm. It catalyses the reaction [protein]-L-glutamate 5-O-methyl ester + H2O = L-glutamyl-[protein] + methanol + H(+). The enzyme catalyses L-glutaminyl-[protein] + H2O = L-glutamyl-[protein] + NH4(+). Functionally, involved in chemotaxis. Part of a chemotaxis signal transduction system that modulates chemotaxis in response to various stimuli. Catalyzes the demethylation of specific methylglutamate residues introduced into the chemoreceptors (methyl-accepting chemotaxis proteins or MCP) by CheR. Also mediates the irreversible deamidation of specific glutamine residues to glutamic acid. This chain is Protein-glutamate methylesterase/protein-glutamine glutaminase, found in Sulfurimonas denitrificans (strain ATCC 33889 / DSM 1251) (Thiomicrospira denitrificans (strain ATCC 33889 / DSM 1251)).